A 3008-amino-acid chain; its full sequence is Genome polyprotein (3008 aa).

Ser2 carries the N-acetylserine; by host modification. The tract at residues 2-23 (STNPKPQRKTKRNTNRRPMDVK) is interaction with STAT1. The tract at residues 2-58 (STNPKPQRKTKRNTNRRPMDVKFPGGGQIVGGVYLLPRRGPRLGVRATRKTSERSQP) is interaction with EIF2AK2/PKR. An interaction with DDX3X region spans residues 2 to 59 (STNPKPQRKTKRNTNRRPMDVKFPGGGQIVGGVYLLPRRGPRLGVRATRKTSERSQPR). The disordered stretch occupies residues 2 to 75 (STNPKPQRKT…PKARRPEGRS (74 aa)). The Cytoplasmic segment spans residues 2–168 (STNPKPQRKT…EDGINYATGN (167 aa)). 2 short sequence motifs (nuclear localization signal) span residues 5–13 (PKPQRKTKR) and 38–43 (PRRGPR). Residues 7-16 (PQRKTKRNTN) show a composition bias toward basic residues. The segment covering 32 to 47 (GGVYLLPRRGPRLGVR) has biased composition (low complexity). Ser53 carries the post-translational modification Phosphoserine; by host. 2 short sequence motifs (nuclear localization signal) span residues 58-64 (PRGRRQP) and 66-71 (PKARRP). Positions 58 to 68 (PRGRRQPIPKA) are enriched in basic residues. Phosphoserine; by host occurs at positions 99 and 116. Positions 112 to 152 (PRGRSRNLGKVIDTLTCGFADLMGYIPLVGAPVGSVARALA) are important for endoplasmic reticulum and mitochondrial localization. The tract at residues 122–173 (VIDTLTCGFADLMGYIPLVGAPVGSVARALAHGVRALEDGINYATGNLPGCS) is interaction with APOA2. The tract at residues 164 to 167 (YATG) is important for lipid droplets localization. Residues 169-189 (LPGCSFSIFLLALLSCLTVPA) form a helical membrane-spanning segment. Residues 178–191 (LLALLSCLTVPASA) constitute a propeptide, ER anchor for the core protein, removed in mature form by host signal peptidase. Topologically, residues 190–358 (SAVNYRNVSG…SGGHWGVLVG (169 aa)) are lumenal. Residues Asn196, Asn209, and Asn234 are each glycosylated (N-linked (GlcNAc...) asparagine; by host). Residues 265-296 (MVGAATVCSGLYIGDLCGGLFLVGQMFSFRPR) form an important for fusion region. A glycan (N-linked (GlcNAc...) asparagine; by host) is linked at Asn305. A helical transmembrane segment spans residues 359-379 (VAYFSMQANWAKVILVLFLFA). The Lumenal segment spans residues 380 to 725 (GVDAETHVSG…WEYVVLAFLL (346 aa)). Residues 385–412 (THVSGAAVGRSTAGLANLFSSGSKQNLQ) form an HVR1 region. Asn417, Asn423, and Asn430 each carry an N-linked (GlcNAc...) (high mannose) asparagine; by host glycan. 4 disulfides stabilise this stretch: Cys429–Cys553, Cys452–Cys459, Cys487–Cys495, and Cys504–Cys509. Asn448 is a glycosylation site (N-linked (GlcNAc...) asparagine; by host). Positions 475-479 (ANISG) are HVR2. A glycan (N-linked (GlcNAc...) asparagine; by host) is linked at Asn476. Residues 481–494 (SDDRPYCWHYAPRP) are CD81-binding 1. Residue Asn533 is glycosylated (N-linked (GlcNAc...) asparagine; by host). The interval 545–552 (PPHGAWFG) is CD81-binding 2. The N-linked (GlcNAc...) asparagine; by host glycan is linked to Asn557. Cystine bridges form between Cys565-Cys570, Cys581-Cys585, Cys597-Cys620, and Cys607-Cys644. 2 N-linked (GlcNAc...) (high mannose) asparagine; by host glycosylation sites follow: Asn623 and Asn645. Cys652 and Cys677 are oxidised to a cystine. A PKR/eIF2-alpha phosphorylation homology domain (PePHD) region spans residues 660 to 671 (VELSPLLLTTTA). Residues 726–746 (LADARVSAYLWMMFMVSQVEA) form a helical membrane-spanning segment. The Lumenal segment spans residues 747-757 (ALSNLININAA). Residues 758-778 (SAAGAQGFWYAILFICIVWHV) form a helical membrane-spanning segment. At 779-782 (KGRF) the chain is on the cytoplasmic side. Residues 783–803 (PAAAAYAACGLWPCFLLLLML) traverse the membrane as a helical segment. The Lumenal segment spans residues 804–813 (PERAYAYDQE). The chain crosses the membrane as a helical span at residues 814–834 (VAGSLGGAIVVMLTILTLSPH). The Cytoplasmic segment spans residues 835–881 (YKLWLARGLWWIQYFIARTEAVLHVYIPSFNVRGPRDSVIVLAVLVC). A helical transmembrane segment spans residues 882–902 (PDLVFDITKYLLAILGPLHIL). Residues 903-928 (QASLLRIPYFVRAQALVKICSLLRGV) lie on the Lumenal side of the membrane. A Peptidase C18 domain is found at 903–1026 (QASLLRIPYF…TETSKGWRLL (124 aa)). The tract at residues 904–1206 (ASLLRIPYFV…PVESLETTMR (303 aa)) is protease NS2-3. The S-palmitoyl cysteine; by host moiety is linked to residue Cys922. A helical transmembrane segment spans residues 929-949 (VYGKYFQMVVLKSRGLTGTYI). The interaction with host SCPS1 stretch occupies residues 929–949 (VYGKYFQMVVLKSRGLTGTYI). The Cytoplasmic segment spans residues 950–1657 (YDHLTPMSDW…CMSADLEVVT (708 aa)). Catalysis depends on for protease NS2 activity; shared with dimeric partner residues His952, Glu972, and Cys993. Positions 1027–1208 (APITAYAQQT…ESLETTMRSP (182 aa)) constitute a Peptidase S29 domain. Residues His1083 and Asp1107 each act as charge relay system; for serine protease NS3 activity in the active site. Residues Cys1123 and Cys1125 each coordinate Zn(2+). Ser1165 acts as the Charge relay system; for serine protease NS3 activity in catalysis. Positions 1171 and 1175 each coordinate Zn(2+). The 153-residue stretch at 1217–1369 (PAVPQTYQVA…SNIEEVALPT (153 aa)) folds into the Helicase ATP-binding domain. An ATP-binding site is contributed by 1230 to 1237 (APTGSGKS). Mg(2+)-binding residues include Ser1237 and Glu1317. A DECH box motif is present at residues 1316–1319 (DECY). Positions 1486 to 1498 (QRRGRTGRGRLGT) are RNA-binding. A helical membrane pass occupies residues 1658–1678 (STWVLVGGVLAALAAYCLSVG). The NS3-binding stretch occupies residues 1679 to 1690 (SVVIVGRVVLSG). Residues 1679 to 1805 (SVVIVGRVVL…AVTSPLTTQQ (127 aa)) are Cytoplasmic-facing. A helical membrane pass occupies residues 1806–1826 (TLLFNILGGWVASQIRDSDAS). The Lumenal segment spans residues 1827-1828 (TA). A helical transmembrane segment spans residues 1829 to 1849 (FVVSGLAGAAVGSVGLGKILV). Residue Asp1850 is a topological domain, cytoplasmic. A helical transmembrane segment spans residues 1851-1871 (ILPGYGAGVRGAVVTFKIMSG). Topologically, residues 1872 to 1881 (EMPSTEDLVN) are lumenal. Residues 1882 to 1902 (LLPAILSPGALVVEVVCPAIL) form a helical membrane-spanning segment. Residues 1903-1972 (RRHVGPGEGA…WINEDCSTPC (70 aa)) lie on the Cytoplasmic side of the membrane. Residue Cys1972 is the site of S-palmitoyl cysteine; by host attachment. The stretch at 1973 to 2002 (AESWLWEVWDWVLHVLSDFKTCLKAKFVPL) is an intramembrane region. Over 2003-2987 (MPGIPLLSWP…YHSMSHARPR (985 aa)) the chain is Cytoplasmic. Positions 2029, 2031, and 2052 each coordinate Zn(2+). Residues 2120–2208 (ELFTEVDGIR…ASSSASQLSP (89 aa)) form an FKBP8-binding region. The interval 2120-2329 (ELFTEVDGIR…PVPSPRRKRT (210 aa)) is transcriptional activation. Residues 2135 to 2139 (PKCKP) form an interaction with non-structural protein 4A region. Residues 2189–2435 (RLARGSRPSL…ALVTPCAAEE (247 aa)) form an interaction with host SKP2 region. 5 positions are modified to phosphoserine; by host: Ser2194, Ser2197, Ser2201, Ser2204, and Ser2207. Positions 2210–2245 (LLQATCTAPHDSPGTDLLEANLLWGSTATRVETDEK) are ISDR. Residues 2210–2272 (LLQATCTAPH…REVSVAAEIL (63 aa)) form an interaction with EIF2AK2/PKR region. The segment at 2245–2303 (KVIILDSFESCVAEQNDDREVSVAAEILRPTKKFPPALPIWARPDYNPPLTETWKQQDY) is NS4B-binding. Positions 2296 to 2373 (ETWKQQDYQA…TPTETTDSGP (78 aa)) are V3. The short motif at 2319–2322 (PPVP) is the SH3-binding element. The Nuclear localization signal motif lies at 2324-2332 (PRRKRTVQL). Positions 2346–2406 (AKTFGQSEPS…DPDLTSDSWS (61 aa)) are disordered. Residue Lys2347 forms a Glycyl lysine isopeptide (Lys-Gly) (interchain with G-Cter in ubiquitin) linkage. Ser2446 is modified (phosphoserine; by host). Residues 2631–2749 (PMGFSYDTRC…IAESDGVEED (119 aa)) form the RdRp catalytic domain. Mg(2+) is bound by residues Asp2637, Asp2735, and Asp2736. The chain crosses the membrane as a helical span at residues 2988-3008 (YLLLCLLILTVGVGIFLLPAR).

The protein belongs to the hepacivirus polyprotein family. As to quaternary structure, homooligomer. Interacts with E1 (via C-terminus). Interacts with the non-structural protein 5A. Interacts (via N-terminus) with host STAT1 (via SH2 domain); this interaction results in decreased STAT1 phosphorylation and ubiquitin-mediated proteasome-dependent STAT1 degradation, leading to decreased IFN-stimulated gene transcription. Interacts with host STAT3; this interaction constitutively activates STAT3. Interacts with host LTBR receptor. Interacts with host TNFRSF1A receptor and possibly induces apoptosis. Interacts with host HNRPK. Interacts with host YWHAE. Interacts with host UBE3A/E6AP. Interacts with host DDX3X. Interacts with host APOA2. Interacts with host RXRA protein. Interacts with host SP110 isoform 3/Sp110b; this interaction sequesters the transcriptional corepressor SP110 away from the nucleus. Interacts with host CREB3 nuclear transcription protein; this interaction triggers cell transformation. Interacts with host ACY3. Interacts with host C1QR1. Interacts with host RBM24; this interaction, which enhances the interaction of the mature core protein with 5'-UTR, may inhibit viral translation and favor replication. Interacts with host EIF2AK2/PKR; this interaction induces the autophosphorylation of EIF2AK2. Part of the viral assembly initiation complex composed of NS2, E1, E2, NS3, NS4A, NS5A and the mature core protein. In terms of assembly, forms a heterodimer with envelope glycoprotein E2. Interacts with mature core protein. Interacts with protease NS2. The heterodimer E1/E2 interacts with host CLDN1; this interaction plays a role in viral entry into host cell. Interacts with host SPSB2 (via C-terminus). Part of the viral assembly initiation complex composed of NS2, E1, E2, NS3, NS4A, NS5A and the mature core protein. Interacts with host NEURL3; this interaction prevents E1 binding to glycoprotein E2. Forms a heterodimer with envelope glycoprotein E1. Interacts with host CD81 and SCARB1 receptors; these interactions play a role in viral entry into host cell. Interacts with host EIF2AK2/PKR; this interaction inhibits EIF2AK2 and probably allows the virus to evade the innate immune response. Interacts with host CD209/DC-SIGN and CLEC4M/DC-SIGNR. Interact with host SPCS1; this interaction is essential for viral particle assembly. Interacts with protease NS2. The heterodimer E1/E2 interacts with host CLDN1; this interaction plays a role in viral entry into host cell. Part of the viral assembly initiation complex composed of NS2, E1, E2, NS3, NS4A, NS5A and the mature core protein. Interacts with host SLC3A2/4F2hc; the interaction may facilitate viral entry into host cell. Interacts with human PLSCR1. As to quaternary structure, homohexamer. Homoheptamer. Interacts with protease NS2. In terms of assembly, homodimer. Interacts with host SPCS1; this interaction is essential for viral particle assembly. Interacts with envelope glycoprotein E1. Interacts with envelope glycoprotein E2. Interacts with viroporin p7. Interacts with serine protease/helicase NS3. Part of the replication complex composed of NS2, NS3, NS4A, NS4B, NS5A and the RNA-directed RNA polymerase embedded in an ER-derived membranous web. Part of the viral assembly initiation complex composed of NS2, E1, E2, NS3, NS4A, NS5A and the mature core protein. Interacts with protease NS2. Interacts with non-structural protein 4A; this interaction stabilizes the folding of NS3 serine protease. NS3-NS4A interaction is essential for NS3 activation and allows membrane anchorage of the latter. NS3/NS4A complex also prevents phosphorylation of host IRF3, thus preventing the establishment of dsRNA induced antiviral state. Interacts with host MAVS; this interaction leads to the cleavage and inhibition of host MAVS. Interacts with host TICAM1; this interaction leads to the cleavage and inhibition of host TICAM1. Interacts with host TANK-binding kinase/TBK1; this interaction results in the inhibition of the association between TBK1 and IRF3, which leads to the inhibition of IRF3 activation. Interacts with host RBM24. Part of the replication complex composed of NS2, NS3, NS4A, NS4B, NS5A and the RNA-directed RNA polymerase embedded in an ER-derived membranous web. Part of the viral assembly initiation complex composed of NS2, E1, E2, NS3, NS4A, NS5A and the mature core protein. As to quaternary structure, interacts with NS3 serine protease; this interaction stabilizes the folding of NS3 serine protease. NS3-NS4A interaction is essential for NS3 activation and allows membrane anchorage of the latter. Interacts with non-structural protein 5A (via N-terminus). Part of the replication complex composed of NS2, NS3, NS4A, NS4B, NS5A and the RNA-directed RNA polymerase embedded in an ER-derived membranous web. Part of the viral assembly initiation complex composed of NS2, E1, E2, NS3, NS4A, NS5A and the mature core protein. In terms of assembly, homomultimer. Interacts with non-structural protein NS5A. Interacts with host PLA2G4C; this interaction likely initiates the recruitment of replication complexes to lipid droplets. Interacts with host STING; this interaction disrupts the interaction between STING and TBK1 thereby suppressing the interferon signaling. Part of the replication complex composed of NS2, NS3, NS4A, NS4B, NS5A and the RNA-directed RNA polymerase embedded in an ER-derived membranous web. Monomer. Homodimer; dimerization is required for RNA-binding. Interacts with the mature core protein. Interacts (via N-terminus) with non-structural protein 4A. Interacts with non-structural protein 4B. Interacts (via region D2) with RNA-directed RNA polymerase. Part of the viral assembly initiation complex composed of NS2, E1, E2, NS3, NS4A, NS5A and the mature core protein. Part of the replication complex composed of NS2, NS3, NS4A, NS4B, NS5A and the RNA-directed RNA polymerase embedded in an ER-derived membranous web. Interacts with host GRB2. Interacts with host BIN1. Interacts with host PIK3R1. Interacts with host SRCAP. Interacts with host FKBP8. Interacts (via C-terminus) with host VAPB (via MSP domain). Interacts with host EIF2AK2/PKR; this interaction leads to disruption of EIF2AK2 dimerization by NS5A and probably allows the virus to evade the innate immune response. Interacts (via N-terminus) with host PACSIN2 (via N-terminus); this interaction attenuates protein kinase C alpha-mediated phosphorylation of PACSIN2 by disrupting the interaction between PACSIN2 and PRKCA. Interacts (via N-terminus) with host SRC kinase (via SH2 domain). Interacts with most Src-family kinases. Interacts with host IFI27 and SKP2; promotes the ubiquitin-mediated proteasomal degradation of NS5A. Interacts with host GPS2. Interacts with host TNFRSF21; this interaction allows the modulation by the virus of JNK, p38 MAPK, STAT3, and Akt signaling pathways in a DR6-dependent manner. Interacts (via N-terminus) with host CIDEB (via N-terminus); this interaction seems to regulate the association of HCV particles with APOE. Interacts with host CHKA/Choline Kinase-alpha; CHKA bridges host PI4KA and NS5A and potentiates NS5A-stimulated PI4KA activity, which then facilitates the targeting of the ternary complex to the ER for viral replication. Interacts with host SPSB2 (via C-terminus); this interaction targets NS5A for ubiquitination and degradation. Interacts with host RAB18; this interaction may promote the association of NS5A and other replicase components with lipid droplets. Interacts (via region D2) with host PPIA/CYPA; the interaction stimulates RNA-binding ability of NS5A and is dependent on the peptidyl-prolyl cis-trans isomerase activity of PPIA/CYPA. Interacts with host TRIM14; this interaction induces the degradation of NS5A. As to quaternary structure, homooligomer. Interacts with non-structural protein 5A. Interacts with host VAPB. Interacts with host PRK2/PKN2. Interacts with host HNRNPA1 and SEPT6; these interactions facilitate viral replication. Part of the replication complex composed of NS2, NS3, NS4A, NS4B, NS5A and the RNA-directed RNA polymerase. Requires Zn(2+) as cofactor. The cofactor is Mg(2+). Post-translationally, specific enzymatic cleavages in vivo yield mature proteins. The structural proteins, core, E1, E2 and p7 are produced by proteolytic processing by host signal peptidases. The core protein precursor is synthesized as a 23 kDa, which is retained in the ER membrane through the hydrophobic signal peptide. Cleavage by the signal peptidase releases the 21 kDa mature core protein. The cleavage of the core protein precursor occurs between aminoacids 176 and 188 but the exact cleavage site is not known. Some degraded forms of the core protein appear as well during the course of infection. The other proteins (p7, NS2, NS3, NS4A, NS4B, NS5A and NS5B) are cleaved by the viral proteases. Autoprocessing between NS2 and NS3 is mediated by the NS2 cysteine protease catalytic domain and regulated by the NS3 N-terminal domain. In terms of processing, phosphorylated by host PKC and PKA. Ubiquitinated; mediated by UBE3A and leading to core protein subsequent proteasomal degradation. Post-translationally, highly N-glycosylated. In terms of processing, palmitoylation is required for NS2/3 autoprocessing and E2 recruitment to membranes. Palmitoylated. This modification may play a role in its polymerization or in protein-protein interactions. Post-translationally, phosphorylated on serines in a basal form termed p56. p58 is a hyperphosphorylated form of p56. p56 and p58 coexist in the cell in roughly equivalent amounts. Hyperphosphorylation is dependent on the presence of NS4A. Host CSNK1A1/CKI-alpha or RPS6KB1 kinases may be responsible for NS5A phosphorylation. In terms of processing, tyrosine phosphorylation is essential for the interaction with host SRC. The N-terminus is phosphorylated by host PRK2/PKN2.

It is found in the host endoplasmic reticulum membrane. The protein resides in the host mitochondrion membrane. It localises to the virion. Its subcellular location is the host cytoplasm. The protein localises to the host nucleus. It is found in the host lipid droplet. The protein resides in the virion membrane. It localises to the host mitochondrion. Its subcellular location is the host cell membrane. The protein localises to the host perinuclear region. The enzyme catalyses Hydrolysis of four peptide bonds in the viral precursor polyprotein, commonly with Asp or Glu in the P6 position, Cys or Thr in P1 and Ser or Ala in P1'.. It catalyses the reaction a ribonucleoside 5'-triphosphate + H2O = a ribonucleoside 5'-diphosphate + phosphate + H(+). The catalysed reaction is ATP + H2O = ADP + phosphate + H(+). It carries out the reaction RNA(n) + a ribonucleoside 5'-triphosphate = RNA(n+1) + diphosphate. Inhibited by the antiviral drug hexamethylene amiloride. Inhibition by amantadine appears to be genotype-dependent. Also inhibited by long-alkyl-chain iminosugar derivatives. With respect to regulation, activity is up-regulated by PRK2/PKN2-mediated phosphorylation. Its function is as follows. Packages viral RNA to form a viral nucleocapsid, and promotes virion budding. Participates in the viral particle production as a result of its interaction with the non-structural protein 5A. Binds RNA and may function as a RNA chaperone to induce the RNA structural rearrangements taking place during virus replication. Modulates viral translation initiation by interacting with viral IRES and 40S ribosomal subunit. Affects various cell signaling pathways, host immunity and lipid metabolism. Prevents the establishment of cellular antiviral state by blocking the interferon-alpha/beta (IFN-alpha/beta) and IFN-gamma signaling pathways and by blocking the formation of phosphorylated STAT1 and promoting ubiquitin-mediated proteasome-dependent degradation of STAT1. Activates STAT3 leading to cellular transformation. Regulates the activity of cellular genes, including c-myc and c-fos. May repress the promoter of p53, and sequester CREB3 and SP110 isoform 3/Sp110b in the cytoplasm. Represses cell cycle negative regulating factor CDKN1A, thereby interrupting an important check point of normal cell cycle regulation. Targets transcription factors involved in the regulation of inflammatory responses and in the immune response: suppresses TNF-induced NF-kappa-B activation, and activates AP-1. Binds to dendritic cells (DCs) via C1QR1, resulting in down-regulation of T-lymphocytes proliferation. Alters lipid metabolism by interacting with hepatocellular proteins involved in lipid accumulation and storage. Induces up-regulation of FAS promoter activity, and thereby contributes to the increased triglyceride accumulation in hepatocytes (steatosis). In terms of biological role, forms a heterodimer with envelope glycoprotein E2, which mediates virus attachment to the host cell, virion internalization through clathrin-dependent endocytosis and fusion with host membrane. Fusion with the host cell is most likely mediated by both E1 and E2, through conformational rearrangements of the heterodimer required for fusion rather than a classical class II fusion mechanism. E1/E2 heterodimer binds host apolipoproteins such as APOB and ApoE thereby forming a lipo-viro-particle (LVP). APOE associated to the LVP allows the initial virus attachment to cell surface receptors such as the heparan sulfate proteoglycans (HSPGs), syndecan-1 (SDC1), syndecan-1 (SDC2), the low-density lipoprotein receptor (LDLR) and scavenger receptor class B type I (SCARB1). The cholesterol transfer activity of SCARB1 allows E2 exposure and binding of E2 to SCARB1 and the tetraspanin CD81. E1/E2 heterodimer binding on CD81 activates the epithelial growth factor receptor (EGFR) signaling pathway. Diffusion of the complex E1-E2-EGFR-SCARB1-CD81 to the cell lateral membrane allows further interaction with Claudin 1 (CLDN1) and occludin (OCLN) to finally trigger HCV entry. Forms a heterodimer with envelope glycoprotein E1, which mediates virus attachment to the host cell, virion internalization through clathrin-dependent endocytosis and fusion with host membrane. Fusion with the host cell is most likely mediated by both E1 and E2, through conformational rearrangements of the heterodimer required for fusion rather than a classical class II fusion mechanism. The interaction between envelope glycoprotein E2 and host apolipoprotein E/APOE allows the proper assembly, maturation and infectivity of the viral particles. This interaction is probably promoted via the up-regulation of cellular autophagy by the virus. E1/E2 heterodimer binds host apolipoproteins such as APOB and APOE thereby forming a lipo-viro-particle (LVP). APOE associated to the LVP allows the initial virus attachment to cell surface receptors such as the heparan sulfate proteoglycans (HSPGs), syndecan-1 (SDC1), syndecan-1 (SDC2), the low-density lipoprotein receptor (LDLR) and scavenger receptor class B type I (SCARB1). The cholesterol transfer activity of SCARB1 allows E2 exposure and binding of E2 to SCARB1 and the tetraspanin CD81. E1/E2 heterodimer binding on CD81 activates the epithelial growth factor receptor (EGFR) signaling pathway. Diffusion of the complex E1-E2-EGFR-SCARB1-CD81 to the cell lateral membrane allows further interaction with Claudin 1 (CLDN1) and occludin (OCLN) to finally trigger HCV entry. Inhibits host EIF2AK2/PKR activation, preventing the establishment of an antiviral state. Viral ligand for CD209/DC-SIGN and CLEC4M/DC-SIGNR, which are respectively found on dendritic cells (DCs), and on liver sinusoidal endothelial cells and macrophage-like cells of lymph node sinuses. These interactions allow the capture of circulating HCV particles by these cells and subsequent facilitated transmission to permissive cells such as hepatocytes and lymphocyte subpopulations. The interaction between E2 and host amino acid transporter complex formed by SLC3A2 and SLC7A5/LAT1 may facilitate viral entry into host cell. Functionally, ion channel protein that acts as a viroporin and plays an essential role in the assembly, envelopment and secretion of viral particles. Regulates the host cell secretory pathway, which induces the intracellular retention of viral glycoproteins and favors assembly of viral particles. Creates a pore in acidic organelles and releases Ca(2+) and H(+) in the cytoplasm of infected cells, leading to a productive viral infection. High levels of cytoplasmic Ca(2+) may trigger membrane trafficking and transport of viral ER-associated proteins to viroplasms, sites of viral genome replication. This ionic imbalance induces the assembly of the inflammasome complex, which triggers the maturation of pro-IL-1beta into IL-1beta through the action of caspase-1. Targets also host mitochondria and induces mitochondrial depolarization. In addition of its role as a viroporin, acts as a lipid raft adhesion factor. Its function is as follows. Cysteine protease required for the proteolytic auto-cleavage between the non-structural proteins NS2 and NS3. The N-terminus of NS3 is required for the function of NS2 protease (active region NS2-3). Promotes the initiation of viral particle assembly by mediating the interaction between structural and non-structural proteins. In terms of biological role, displays three enzymatic activities: serine protease with a chymotrypsin-like fold, NTPase and RNA helicase. NS3 serine protease, in association with NS4A, is responsible for the cleavages of NS3-NS4A, NS4A-NS4B, NS4B-NS5A and NS5A-NS5B. The NS3/NS4A complex prevents phosphorylation of host IRF3, thus preventing the establishment of dsRNA induced antiviral state. The NS3/NS4A complex induces host amino acid transporter component SLC3A2, thus contributing to HCV propagation. NS3 RNA helicase binds to RNA and unwinds both dsDNA and dsRNA in the 3' to 5' direction, and likely resolves RNA complicated stable secondary structures in the template strand. Binds a single ATP and catalyzes the unzipping of a single base pair of dsRNA. Inhibits host antiviral proteins TBK1 and IRF3 thereby preventing the establishment of an antiviral state. Cleaves host MAVS/CARDIF thereby preventing the establishment of an antiviral state. Cleaves host TICAM1/TRIF, thereby disrupting TLR3 signaling and preventing the establishment of an antiviral state. Induces a specific membrane alteration that serves as a scaffold for the virus replication complex. This membrane alteration gives rise to the so-called ER-derived membranous web that contains the replication complex. NS4B self-interaction contributes to its function in membranous web formation. Promotes host TRIF protein degradation in a CASP8-dependent manner thereby inhibiting host TLR3-mediated interferon signaling. Disrupts the interaction between STING and TBK1 contributing to the inhibition of interferon signaling. Functionally, phosphorylated protein that is indispensable for viral replication and assembly. Both hypo- and hyperphosphorylated states are required for the viral life cycle. The hyperphosphorylated form of NS5A is an inhibitor of viral replication. Involved in RNA-binding and especially in binding to the viral genome. Zinc is essential for RNA-binding. Participates in the viral particle production as a result of its interaction with the mature viral core protein. Its interaction with host VAPB may target the viral replication complex to vesicles. Down-regulates viral IRES translation initiation. Mediates interferon resistance, presumably by interacting with and inhibiting host EIF2AK2/PKR. Prevents BIN1-induced apoptosis. Acts as a transcriptional activator of some host genes important for viral replication when localized in the nucleus. Via the interaction with host PACSIN2, modulates lipid droplet formation in order to promote virion assembly. Modulates TNFRSF21/DR6 signaling pathway for viral propagation. Its function is as follows. RNA-dependent RNA polymerase that performs primer-template recognition and RNA synthesis during viral replication. Initiates RNA transcription/replication at a flavin adenine dinucleotide (FAD), resulting in a 5'- FAD cap on viral RNAs. In this way, recognition of viral 5' RNA by host pattern recognition receptors can be bypassed, thereby evading activation of antiviral pathways. In Homo sapiens (Human), this protein is Genome polyprotein.